Consider the following 562-residue polypeptide: Phosphoglucomutase-1 (562 aa).

Methionine 1 is subject to N-acetylmethionine. At lysine 16 the chain carries N6-acetyllysine. Arginine 23 contributes to the alpha-D-glucose 1,6-bisphosphate binding site. Threonine 115 is modified (phosphothreonine). Serine 117 is an alpha-D-glucose 1,6-bisphosphate binding site. Serine 117 acts as the Phosphoserine intermediate in catalysis. Residue serine 117 participates in Mg(2+) binding. Serine 117 and serine 134 each carry phosphoserine. The residue at position 185 (threonine 185) is a Phosphothreonine. Residues serine 206 and serine 213 each carry the phosphoserine modification. Mg(2+) contacts are provided by aspartate 288, aspartate 290, and aspartate 292. Aspartate 292 and arginine 293 together coordinate alpha-D-glucose 1,6-bisphosphate. Position 349 is an N6-acetyllysine (lysine 349). Tyrosine 353 carries the post-translational modification Phosphotyrosine. Threonine 357 lines the alpha-D-glucose 1,6-bisphosphate pocket. At serine 369 the chain carries Phosphoserine. Positions 376, 378, and 389 each coordinate alpha-D-glucose 1,6-bisphosphate. Serine 378 bears the Phosphoserine mark. The residue at position 419 (lysine 419) is an N6-succinyllysine. A Phosphothreonine; by PAK1 modification is found at threonine 467. Phosphoserine occurs at positions 477, 485, and 505. The residue at position 507 (threonine 507) is a Phosphothreonine. Phosphoserine is present on residues serine 509 and serine 541.

The protein belongs to the phosphohexose mutase family. Monomer. Mg(2+) serves as cofactor. Phosphorylation at Thr-467 by PAK1 significantly enhances enzymatic activity.

Its subcellular location is the cytoplasm. It catalyses the reaction alpha-D-glucose 1-phosphate = alpha-D-glucose 6-phosphate. The catalysed reaction is O-phospho-L-seryl-[protein] + alpha-D-glucose 1-phosphate = alpha-D-glucose 1,6-bisphosphate + L-seryl-[protein]. It carries out the reaction alpha-D-glucose 1,6-bisphosphate + L-seryl-[protein] = O-phospho-L-seryl-[protein] + alpha-D-glucose 6-phosphate. Its function is as follows. Catalyzes the reversible isomerization of alpha-D-glucose 1-phosphate to alpha-D-glucose 6-phosphate. The mechanism proceeds via the intermediate compound alpha-D-glucose 1,6-bisphosphate. This enzyme participates in both the breakdown and synthesis of glucose. This chain is Phosphoglucomutase-1 (PGM1), found in Macaca fascicularis (Crab-eating macaque).